The chain runs to 343 residues: Methionine import ATP-binding protein MetN (343 aa).

Residues 2–241 form the ABC transporter domain; the sequence is IKLSNITKVF…PKTPLAQKFI (240 aa). 38-45 contributes to the ATP binding site; sequence GASGAGKS.

It belongs to the ABC transporter superfamily. Methionine importer (TC 3.A.1.24) family. As to quaternary structure, the complex is composed of two ATP-binding proteins (MetN), two transmembrane proteins (MetI) and a solute-binding protein (MetQ).

The protein resides in the cell inner membrane. The enzyme catalyses L-methionine(out) + ATP + H2O = L-methionine(in) + ADP + phosphate + H(+). It carries out the reaction D-methionine(out) + ATP + H2O = D-methionine(in) + ADP + phosphate + H(+). Functionally, part of the ABC transporter complex MetNIQ involved in methionine import. Responsible for energy coupling to the transport system. The chain is Methionine import ATP-binding protein MetN from Escherichia coli O6:K15:H31 (strain 536 / UPEC).